Consider the following 212-residue polypeptide: MNAKFIVIEGLEGAGKSTAIQVVVETLQQNGIDHITRTREPGGTLLAEKLRALVKEEHPGEELQDITELLLVYAARVQLVENVIKPALARGEWVVGDRHDMSSQAYQGGGRQIAPSTMQSLKQTALGDFKPDLTLYLDIDPKLGLERARGRGELDRIEKMDISFFERARERYLELANSDDSVVMIDAAQSIEQVTADIRRALQDWLSQVNRV.

10–17 provides a ligand contact to ATP; the sequence is GLEGAGKS.

The protein belongs to the thymidylate kinase family.

The enzyme catalyses dTMP + ATP = dTDP + ADP. Functionally, phosphorylation of dTMP to form dTDP in both de novo and salvage pathways of dTTP synthesis. This chain is Thymidylate kinase, found in Vibrio cholerae serotype O1 (strain ATCC 39541 / Classical Ogawa 395 / O395).